Reading from the N-terminus, the 206-residue chain is Superoxide dismutase [Mn] (206 aa).

Mn(2+) contacts are provided by histidine 27, histidine 82, aspartate 168, and histidine 172.

The protein belongs to the iron/manganese superoxide dismutase family. Mn(2+) is required as a cofactor.

It catalyses the reaction 2 superoxide + 2 H(+) = H2O2 + O2. Its function is as follows. Destroys superoxide anion radicals which are normally produced within the cells and which are toxic to biological systems. The protein is Superoxide dismutase [Mn] (sodA) of Lactococcus lactis subsp. lactis (strain IL1403) (Streptococcus lactis).